The chain runs to 3410 residues: Genome polyprotein (3410 aa).

Topologically, residues 1 to 103 are cytoplasmic; sequence MTKKPGRPGR…DFVHLPKKKS (103 aa). An interaction with host EXOC1 region spans residues 2-15; it reads TKKPGRPGRNRAVN. Positions 38–73 are hydrophobic; homodimerization of capsid protein C; sequence LLDGRGPLRMVLAILAFFRFTALKPTAGLLKRWGMM. Positions 103–119 are cleaved as a propeptide — ER anchor for the capsid protein C, removed in mature form by serine protease NS3; sequence SGVSIIGRMLVFSFTAA. The helical transmembrane segment at 104 to 124 threads the bilayer; it reads GVSIIGRMLVFSFTAAVRVTL. Residues 125–245 are Extracellular-facing; sequence ENGMSLMKIQ…ATSYLTKAES (121 aa). Residues 246–266 form a helical membrane-spanning segment; the sequence is WALRNPGYALVAAVLGWSLGT. Residues 267–271 lie on the Cytoplasmic side of the membrane; it reads SNAQK. A helical transmembrane segment spans residues 272 to 286; it reads VIFTVMILLIAPAYS. Topologically, residues 287–739 are extracellular; that stretch reads IRCVGVENRD…QIFGGMFRTL (453 aa). 6 disulfide bridges follow: C289–C316, C346–C402, C346–C407, C360–C391, C378–C402, and C378–C407. The segment at 384–397 is fusion peptide; that stretch reads DRGWGNGCGLFGKG. N440 carries an N-linked (GlcNAc...) asparagine; by host glycan. Intrachain disulfides connect C476–C574 and C591–C622. The helical transmembrane segment at 740–760 threads the bilayer; sequence FGGMSWFTQIMIGALCCWLGI. Residues 761 to 766 lie on the Cytoplasmic side of the membrane; that stretch reads NARDRT. The chain crosses the membrane as a helical span at residues 767–787; the sequence is IAVTFLAVGGVLVFLATSVNA. Residues 788–1165 are Extracellular-facing; sequence DSGCALDLKR…IALQEVMRKR (378 aa). Disulfide bonds link C791–C802, C842–C928, C964–C1009, C1066–C1115, C1077–C1098, C1077–C1099, C1098–C1102, and C1099–C1102. N915 is a glycosylation site (N-linked (GlcNAc...) asparagine; by host). The helical transmembrane segment at 1166 to 1186 threads the bilayer; that stretch reads ILGRHITWMVIAVFMAMILGG. Residues 1187-1214 are Cytoplasmic-facing; the sequence is LSYRDLGRYLVLVGAAFAERNSGGDLLH. Residues 1215 to 1235 form a helical membrane-spanning segment; that stretch reads LVLVATFKVKPMALLGFVLGG. Residues 1236 to 1242 are Lumenal-facing; that stretch reads RWCRRQS. A helical membrane pass occupies residues 1243-1263; the sequence is LLLSIGAVLVNFALEFQGGYF. Over 1264-1284 the chain is Cytoplasmic; it reads ELVDSLALALLFVKAVVQTDT. Residues 1285–1305 form a helical membrane-spanning segment; the sequence is TSVSLPLLAALAPAGCYTVLG. Residues 1306–1335 are Lumenal-facing; sequence THRFIMLTLVLVTFLGCKKTASVKKAGTAA. Residues 1336 to 1356 traverse the membrane as a helical segment; that stretch reads VGVVLGMVGMKTIPMLGMLMV. The Cytoplasmic portion of the chain corresponds to 1357–1363; the sequence is TSRARRS. A helical transmembrane segment spans residues 1364–1384; the sequence is WPLHEAMAAVGILCALFGALA. Topologically, residues 1385–1387 are lumenal; the sequence is ETE. A helical membrane pass occupies residues 1388–1408; that stretch reads VDLAGPLAAAGLIVMAYVISG. Residues 1409 to 1464 are Cytoplasmic-facing; the sequence is RSNDLSIKKVEDVKWSDEAEVTGESVSYHVSLDVRGDPTLTEDSGPGLEKVLLKVG. The segment at 1415–1454 is interacts with and activates NS3 protease; that stretch reads IKKVEDVKWSDEAEVTGESVSYHVSLDVRGDPTLTEDSGP. The helical intramembrane region spans 1465 to 1485; the sequence is LMAISGIYPVAIPFALGAWFF. The Cytoplasmic segment spans residues 1486 to 2158; it reads LEKRCKRAGA…KAALENSPEM (673 aa). The region spanning 1493 to 1670 is the Peptidase S7 domain; the sequence is AGALWDIPSP…ENVGQEDGAE (178 aa). Catalysis depends on charge relay system; for serine protease NS3 activity residues H1543, D1567, and S1627. Positions 1673–1829 constitute a Helicase ATP-binding domain; that stretch reads DNWFRKRELT…PSNSPIIDEE (157 aa). An important for RNA-binding region spans residues 1677-1680; the sequence is RKRE. 1686 to 1693 lines the ATP pocket; sequence LHPGAGKT. Residues 1777–1780 carry the DEAH box motif; sequence DEAH. A Helicase C-terminal domain is found at 1839-2006; that stretch reads SGYEWIIEFD…QLYTPEREKT (168 aa). K1881 carries the N6-acetyllysine; by host modification. The interval 2153-2157 is regulates the ATPase activity of NS3 helicase; it reads ENSPE. A helical membrane pass occupies residues 2159 to 2179; it reads IETFLLCALVCLMTIGLVVVL. Topologically, residues 2180 to 2185 are lumenal; the sequence is VRGKGP. An intramembrane region (helical) is located at residues 2186–2205; sequence GKLAFGMVSIGVMTWLLWSA. Residue G2206 is a topological domain, lumenal. Residues 2207–2227 form a helical membrane-spanning segment; it reads VDPGKIAAAVILVFLLLVVLI. The Cytoplasmic portion of the chain corresponds to 2228 to 2242; it reads PEPEKQRSVQDNQLA. The helical transmembrane segment at 2243 to 2257 threads the bilayer; that stretch reads MLMLLIATILGGVAA. The Lumenal segment spans residues 2258–2293; the sequence is NEMGWLEKTKADLSWVVRGRSSTTTPVVELDMKPAT. The helical intramembrane region spans 2294-2314; the sequence is AWTLYALATTLLTPLFQHLIV. Residues 2315–2336 lie on the Lumenal side of the membrane; the sequence is TKYANISLMAIASQAGTLFSMD. The helical transmembrane segment at 2337 to 2357 threads the bilayer; sequence SGIPFSSIELSVPLLALGCWT. Position 2358 (Q2358) is a topological domain, cytoplasmic. A helical transmembrane segment spans residues 2359-2379; sequence ITPCSLILACVLLSTHYAILL. The Lumenal segment spans residues 2380–2420; the sequence is PGMQAQAARDAQRRTAAGIMKNAVVDGIVATDIPPLDGAGP. Residues 2421–2441 traverse the membrane as a helical segment; the sequence is LTEKKLGQLLLFAAAVTGVVI. Over 2442-3410 the chain is Cytoplasmic; that stretch reads TRSPRSWSEL…EKRVEFRGVL (969 aa). The 266-residue stretch at 2508-2773 folds into the mRNA cap 0-1 NS5-type MT domain; the sequence is GGGIGETLGE…DVNLSCGTRA (266 aa). Residue S2563 participates in S-adenosyl-L-methionine binding. Residue S2563 is modified to Phosphoserine. The active-site For 2'-O-MTase activity is the K2568. Residues G2593, W2594, T2611, K2612, D2638, and V2639 each contribute to the S-adenosyl-L-methionine site. Catalysis depends on D2653, which acts as the For 2'-O-MTase activity. I2654 serves as a coordination point for S-adenosyl-L-methionine. Catalysis depends on for 2'-O-MTase activity residues K2690 and E2726. Y2728 is a binding site for S-adenosyl-L-methionine. Zn(2+) contacts are provided by E2947, H2951, C2956, and C2959. A RdRp catalytic domain is found at 3036-3187; sequence GILYADDTAG…AAPDARFGAA (152 aa). Residues H3222, C3238, and C3356 each contribute to the Zn(2+) site.

The protein in the N-terminal section; belongs to the class I-like SAM-binding methyltransferase superfamily. mRNA cap 0-1 NS5-type methyltransferase family. Homodimer. Interacts (via N-terminus) with host EXOC1 (via C-terminus); this interaction results in EXOC1 degradation through the proteasome degradation pathway. As to quaternary structure, forms heterodimers with envelope protein E in the endoplasmic reticulum and Golgi. In terms of assembly, homodimer; in the endoplasmic reticulum and Golgi. Interacts with protein prM. Interacts with non-structural protein 1. Homodimer; Homohexamer when secreted. Interacts with envelope protein E. NS1 interacts with NS4B. Interacts with host complement protein CFH; this interaction leads to the degradation of C3. As to quaternary structure, interacts (via N-terminus) with serine protease NS3. In terms of assembly, forms a heterodimer with serine protease NS3. May form homooligomers. Forms a heterodimer with NS2B. Interacts with non-structural protein 2A (via N-terminus). Interacts with NS4B. Interacts with unphosphorylated RNA-directed RNA polymerase NS5; this interaction stimulates RNA-directed RNA polymerase NS5 guanylyltransferase activity. As to quaternary structure, interacts with serine protease NS3. In terms of assembly, homodimer. Interacts with host STAT2; this interaction inhibits the phosphorylation of the latter, and, when all viral proteins are present (polyprotein), targets STAT2 for degradation. Specific enzymatic cleavages in vivo yield mature proteins. Cleavages in the lumen of endoplasmic reticulum are performed by host signal peptidase, whereas cleavages in the cytoplasmic side are performed by serine protease NS3. Signal cleavage at the 2K-4B site requires a prior NS3 protease-mediated cleavage at the 4A-2K site. In terms of processing, cleaved in post-Golgi vesicles by a host furin, releasing the mature small envelope protein M, and peptide pr. This cleavage is incomplete as up to 30% of viral particles still carry uncleaved prM. Post-translationally, N-glycosylated. N-glycosylated. The excreted form is glycosylated and this is required for efficient secretion of the protein from infected cells. In terms of processing, acetylated by host KAT5. Acetylation modulates NS3 RNA-binding and unwinding activities and plays an important positive role for viral replication. Post-translationally, phosphorylated on serines residues. This phosphorylation may trigger NS5 nuclear localization.

It localises to the virion. Its subcellular location is the host nucleus. The protein resides in the host cytoplasm. It is found in the host perinuclear region. The protein localises to the secreted. It localises to the virion membrane. Its subcellular location is the host endoplasmic reticulum membrane. The enzyme catalyses Selective hydrolysis of -Xaa-Xaa-|-Yaa- bonds in which each of the Xaa can be either Arg or Lys and Yaa can be either Ser or Ala.. The catalysed reaction is RNA(n) + a ribonucleoside 5'-triphosphate = RNA(n+1) + diphosphate. It carries out the reaction a ribonucleoside 5'-triphosphate + H2O = a ribonucleoside 5'-diphosphate + phosphate + H(+). It catalyses the reaction ATP + H2O = ADP + phosphate + H(+). The enzyme catalyses a 5'-end (5'-triphosphoguanosine)-ribonucleoside in mRNA + S-adenosyl-L-methionine = a 5'-end (N(7)-methyl 5'-triphosphoguanosine)-ribonucleoside in mRNA + S-adenosyl-L-homocysteine. The catalysed reaction is a 5'-end (N(7)-methyl 5'-triphosphoguanosine)-ribonucleoside in mRNA + S-adenosyl-L-methionine = a 5'-end (N(7)-methyl 5'-triphosphoguanosine)-(2'-O-methyl-ribonucleoside) in mRNA + S-adenosyl-L-homocysteine + H(+). Plays a role in virus budding by binding to the cell membrane and gathering the viral RNA into a nucleocapsid that forms the core of a mature virus particle. During virus entry, may induce genome penetration into the host cytoplasm after hemifusion induced by the surface proteins. Can migrate to the cell nucleus where it modulates host functions. Overcomes the anti-viral effects of host EXOC1 by sequestering and degrading the latter through the proteasome degradation pathway. In terms of biological role, inhibits RNA silencing by interfering with host Dicer. Its function is as follows. Prevents premature fusion activity of envelope proteins in trans-Golgi by binding to envelope protein E at pH6.0. After virion release in extracellular space, gets dissociated from E dimers. Functionally, acts as a chaperone for envelope protein E during intracellular virion assembly by masking and inactivating envelope protein E fusion peptide. prM is the only viral peptide matured by host furin in the trans-Golgi network probably to avoid catastrophic activation of the viral fusion activity in acidic Golgi compartment prior to virion release. prM-E cleavage is inefficient, and many virions are only partially matured. These uncleaved prM would play a role in immune evasion. May play a role in virus budding. Exerts cytotoxic effects by activating a mitochondrial apoptotic pathway through M ectodomain. May display a viroporin activity. In terms of biological role, binds to host cell surface receptor and mediates fusion between viral and cellular membranes. Envelope protein is synthesized in the endoplasmic reticulum in the form of heterodimer with protein prM. They play a role in virion budding in the ER, and the newly formed immature particle is covered with 60 spikes composed of heterodimer between precursor prM and envelope protein E. The virion is transported to the Golgi apparatus where the low pH causes dissociation of PrM-E heterodimers and formation of E homodimers. prM-E cleavage is inefficient, and many virions are only partially matured. These uncleaved prM would play a role in immune evasion. Its function is as follows. Involved in immune evasion, pathogenesis and viral replication. Once cleaved off the polyprotein, is targeted to three destinations: the viral replication cycle, the plasma membrane and the extracellular compartment. Essential for viral replication. Required for formation of the replication complex and recruitment of other non-structural proteins to the ER-derived membrane structures. Excreted as a hexameric lipoparticle that plays a role against host immune response. Antagonizing the complement function. Binds to the host macrophages and dendritic cells. Inhibits signal transduction originating from Toll-like receptor 3 (TLR3). Functionally, component of the viral RNA replication complex that functions in virion assembly and antagonizes the host alpha/beta interferon antiviral response. Required cofactor for the serine protease function of NS3. May have membrane-destabilizing activity and form viroporins. In terms of biological role, displays three enzymatic activities: serine protease, NTPase and RNA helicase. NS3 serine protease, in association with NS2B, performs its autocleavage and cleaves the polyprotein at dibasic sites in the cytoplasm: C-prM, NS2A-NS2B, NS2B-NS3, NS3-NS4A, NS4A-2K and NS4B-NS5. NS3 RNA helicase binds RNA and unwinds dsRNA in the 3' to 5' direction. Its function is as follows. Regulates the ATPase activity of the NS3 helicase activity. NS4A allows NS3 helicase to conserve energy during unwinding. Functionally, functions as a signal peptide for NS4B and is required for the interferon antagonism activity of the latter. Induces the formation of ER-derived membrane vesicles where the viral replication takes place. Inhibits interferon (IFN)-induced host STAT1 phosphorylation and nuclear translocation, thereby preventing the establishment of cellular antiviral state by blocking the IFN-alpha/beta pathway. Inhibits STAT2 translocation in the nucleus after IFN-alpha treatment. In terms of biological role, replicates the viral (+) and (-) RNA genome, and performs the capping of genomes in the cytoplasm. NS5 methylates viral RNA cap at guanine N-7 and ribose 2'-O positions. Besides its role in RNA genome replication, also prevents the establishment of cellular antiviral state by blocking the interferon-alpha/beta (IFN-alpha/beta) signaling pathway. Inhibits host TYK2 and STAT2 phosphorylation, thereby preventing activation of JAK-STAT signaling pathway. This is Genome polyprotein from Kokobera virus (KOKV).